A 393-amino-acid chain; its full sequence is Adaptive-response sensory kinase SasA (393 aa).

Residues 171 to 393 form the Histidine kinase domain; the sequence is MLAHDLRSPL…CFHFTLPVFR (223 aa). Position 174 is a phosphohistidine; by autocatalysis (histidine 174).

As to quaternary structure, homooligomerizes. Interacts with KaiC. Participates in the KaiABC clock complex, whose core is composed of a KaiC homohexamer, 6 KaiB and up to 6 KaiA dimers. SasA and KaiB(fs) compete to bind to KaiC.

It catalyses the reaction ATP + protein L-histidine = ADP + protein N-phospho-L-histidine.. Its function is as follows. Member of the two-component regulatory system SasA/RpaA involved in genome-wide circadian gene expression. One of several clock output pathways. Participates in the Kai clock protein complex, the main circadian regulator in cyanobacteria, via its interaction with KaiC. KaiC enhances the autophosphorylation activity of SasA, which then transfers its phosphate group to RpaA to activate it. In addition to its output function, recruits fold-shifted KaiB (KaiB(fs)) to KaiC to cooperatively form the KaiB(6):KaiC(6) complex (independent of SasA kinase activity). Required for robustness of the circadian rhythm of gene expression and is involved in clock output, also required for adaptation to light/dark cycles. This chain is Adaptive-response sensory kinase SasA, found in Gloeothece citriformis (strain PCC 7424) (Cyanothece sp. (strain PCC 7424)).